A 585-amino-acid polypeptide reads, in one-letter code: Staphyloferrin A synthase (585 aa).

Belongs to the IucA/IucC family.

It catalyses the reaction N(5)-[(S)-citryl]-D-ornithine + citrate + ATP = staphyloferrin A + AMP + diphosphate + H(+). It functions in the pathway siderophore biosynthesis. In terms of biological role, involved in the biosynthesis of the siderophore staphyloferrin A. Catalyzes the ATP-dependent condensation of a citryl-D-ornithine intermediate, produced by SfnaD, and citrate to form staphyloferrin A. In Staphylococcus aureus (strain NCTC 8325 / PS 47), this protein is Staphyloferrin A synthase.